Reading from the N-terminus, the 385-residue chain is NADH-ubiquinone oxidoreductase chain 2 (385 aa).

10 helical membrane passes run proline 12–leucine 32, valine 34–alanine 50, phenylalanine 66–leucine 86, valine 112–alanine 132, valine 161–phenylalanine 181, leucine 200–phenylalanine 220, leucine 227–leucine 247, alanine 268–phenylalanine 288, tryptophan 291–isoleucine 311, and leucine 354–leucine 374.

It belongs to the complex I subunit 2 family.

The protein resides in the mitochondrion inner membrane. The enzyme catalyses a ubiquinone + NADH + 5 H(+)(in) = a ubiquinol + NAD(+) + 4 H(+)(out). Core subunit of the mitochondrial membrane respiratory chain NADH dehydrogenase (Complex I) that is believed to belong to the minimal assembly required for catalysis. Complex I functions in the transfer of electrons from NADH to the respiratory chain. The immediate electron acceptor for the enzyme is believed to be ubiquinone. This chain is NADH-ubiquinone oxidoreductase chain 2 (ND2), found in Metridium senile (Brown sea anemone).